The chain runs to 1340 residues: MLKIGICSSITISNSISNSYHSPSTSTVVVGNQLQQQQQQQQYVQQQLQYQYDSLNQSQTSPNSNDGNIGGGSGGGNNAGSNIGIGGGGGGNNNNIGGGGGSGGGVNIGSGSGGGGSGSNSNIGGGGGGGQLGMNGMNGSNMLLINQNIPTIKSTDSIGSTVSINSTGVSLQYNSLSSTIGSPSSLSLLSPIISNPFSSTLPNQSYMVNQILFNCLCFHPKSPILYAAIRNEVHFYDIITKSVIGKLFIDPTETIRHLITLPGNSIQTPTFLLAFTQEGVIYLWDPETHKLQTIVHQLKLDDKRPITCKSAAPNKPVIFFSKNESKDIVVVDFHNKGSSPFKLKGHKKPISAIAHHPAKTILASCSTDGQLKIWDTRNNMSFLNFEEFSSYENTRNIEHSNHYFLVFEPTGKYLVMTGSSGLTLVYGDLTSQNPQEVIANGFICKGQNILSIVHHPQLPLFFVLSIGPSGYEELSSWEINNQYKTIVQSPLIPTFIPEINDSLSYLSKYSKPLTIPKFNPVSIVIHPTKNYFSLQLEASSNISSTISPYPSNINSQPFSSIRHINQNIYSINSYDHLNHSFPLVSKLPLPMGFFFEPENTFNYPSEITFFDGTYVKSYLPLNGITKKLIDTPIMVNSASGMGSGGGEDISKGKKFLFNNEFQLFALIYDSFSVAAQAQLSKYLIMDLQGLVNQQGDGSDCVFIGNNQQILILGLDGKLAKVATLSKQGVSSFKNFTLVPRITSVHSTPLGGNKVVLYFCQEKSCLVFSKNVNQSDPSCKDNYMVDIDGDNGILQLQPNEKVFQIEWQSDPKSSQHICAILTNQRIIITNSRLRIINQIHSPPNHHQSTSSYFQSIFWLEWTLLYTTSTHLMYMTLQNNQAPKPISTLSISPIILSTILPDRMIFGYQGLQVPGKNETTVRCQAIGILECLIIGLLSLPPFIQYEKKYLSSCLQNIVQKLDYTRISKHVLDKLRERSFTDLAYSLSNDMKISQSKQSSLEKFRMAWISKQYEAANRHLSIEFNRISIIKNPNDTEKRQFNKLKENMRDFGRECMNAGHYLLAKDCFQKLSEHIYLLQISILLNDRDSVIAIKRDAELRGDDHVLLAACDKYLNKQNKSINKVNPPVVKILPWDPTATTNVSMKSGLDYLSPINLNSIQRYYPISLPFSGASASLNGGKHKLLRPPEESWPPEDFKHSVAITPPRTLMSLVANRLSTKSHMSSTTTLRRSPSIENIRTTSTTFDSSKFNTDNQELFDDDSDDDSDSGADADVDSENEEDRKLVMTVPASLQHNDNSSLTNITVTDNDSNLDQDITSNTGSDIADLNDTQLSSTPTPTTTLSS.

Residues 56–67 (NQSQTSPNSNDG) are compositionally biased toward low complexity. 2 disordered regions span residues 56 to 75 (NQSQ…GSGG) and 110 to 131 (SGSG…GGGQ). WD repeat units lie at residues 208-246 (VNQI…VIGK), 250-294 (DPTE…LQTI), 345-384 (GHKK…SFLN), and 397-436 (IEHS…NPQE). Over residues 1216-1251 (KSHMSSTTTLRRSPSIENIRTTSTTFDSSKFNTDNQ) the composition is skewed to polar residues. Positions 1216 to 1340 (KSHMSSTTTL…TPTPTTTLSS (125 aa)) are disordered. The span at 1252–1275 (ELFDDDSDDDSDSGADADVDSENE) shows a compositional bias: acidic residues. Positions 1286-1318 (ASLQHNDNSSLTNITVTDNDSNLDQDITSNTGS) are enriched in polar residues. Residues 1328–1340 (LSSTPTPTTTLSS) show a composition bias toward low complexity.

Component of the TSET complex, a heterohexamer composed of tstA, tstB, tstC, tstD, tstE and tstF, which may act in plasma membrane turnover. tstA, tstB, tstC and tstD are likely to be the core complex members with tstE and tstF acting as associated scaffold proteins.

In Dictyostelium discoideum (Social amoeba), this protein is TSET complex member tstE.